We begin with the raw amino-acid sequence, 1819 residues long: Gamma-tubulin complex component 6 (1819 aa).

Disordered regions lie at residues serine 810–proline 889, leucine 929–tyrosine 951, and arginine 1000–glutamate 1023. 9 tandem repeats follow at residues glycine 1027 to histidine 1053, glycine 1054 to histidine 1080, glycine 1081 to histidine 1107, glycine 1108 to histidine 1134, glycine 1135 to histidine 1161, glycine 1162 to histidine 1188, glycine 1189 to histidine 1215, glycine 1216 to histidine 1242, and glycine 1243 to histidine 1269. Residues glycine 1027–histidine 1269 form a 9 X 27 AA tandem repeats region. Residues proline 1271 to glutamine 1412 form a disordered region. A compositionally biased stretch (polar residues) spans proline 1297–valine 1314. Over residues leucine 1321–glycine 1335 the composition is skewed to low complexity. Residues tryptophan 1384–proline 1398 are compositionally biased toward polar residues.

It belongs to the TUBGCP family. As to quaternary structure, component of the gamma-tubulin ring complex (gTuRC) consisting of TUBGCP2, TUBGCP3, TUBGCP4, TUBGCP5 and TUBGCP6 and gamma-tubulin TUBG1 or TUBG2. TUBGCP2, TUBGCP3, TUBGCP4, TUBGCP5 and TUBGCP6 assemble in a 5:5:2:1:1 stoichiometry; each is associated with a gamma-tubulin, thereby arranging 14 gamma-tubulins in a helical manner. Gamma-tubulin at the first position is blocked by TUBGCP3 at the last position, allowing 13 protafilaments to grow into a microtubule. The gTuRC (via TUBGCP3 and TUBGCP6) interacts with ACTB and MZT1; the interactions form a luminal bridge that stabilizes the initial structure during complex assembly. The gTuRC (via TUBGCP2) interacts with MZT2A/MZT2B and CDK5RAP2 (via CM1 motif); the interactions play a role in gTuRC activation.

It localises to the cytoplasm. The protein localises to the cytoskeleton. Its subcellular location is the microtubule organizing center. It is found in the centrosome. Functionally, component of the gamma-tubulin ring complex (gTuRC) which mediates microtubule nucleation. The gTuRC regulates the minus-end nucleation of alpha-beta tubulin heterodimers that grow into microtubule protafilaments, a critical step in centrosome duplication and spindle formation. This chain is Gamma-tubulin complex component 6 (TUBGCP6), found in Homo sapiens (Human).